The primary structure comprises 1213 residues: tRNA wybutosine-synthesizing protein 4 (1213 aa).

2 stretches are compositionally biased toward low complexity: residues 1 to 13 and 39 to 52; these read METT…PATT and ATTT…TTPT. The interval 1-76 is disordered; the sequence is METTEEVVAP…DDQVMGTNNS (76 aa). The span at 53-67 shows a compositional bias: basic and acidic residues; sequence HNEHASAKDPRKAQD. S-adenosyl-L-methionine contacts are provided by Arg-117, Gly-148, and Asp-180. Low complexity predominate over residues 215-248; sequence STPAATTTAAATTTTTTELKTTAATASSTSTEAP. Positions 215 to 272 are disordered; sequence STPAATTTAAATTTTTTELKTTAATASSTSTEAPQKPKKSPKPKDKSKAARAPAPTTA. Residues 289–290 and Glu-318 contribute to the S-adenosyl-L-methionine site; that span reads DL. The tract at residues 879-900 is disordered; it reads EPRSLPLRNQAPNGAEGNANGS. A JmjC domain is found at 1006-1166; it reads PTEKPAVLSD…YAAGKDVYGN (161 aa).

The protein belongs to the methyltransferase superfamily. LCMT family.

The catalysed reaction is 7-[(3S)-3-amino-3-carboxypropyl]wyosine(37) in tRNA(Phe) + S-adenosyl-L-methionine = 7-[(3S)-(3-amino-3-methoxycarbonyl)propyl]wyosine(37) in tRNA(Phe) + S-adenosyl-L-homocysteine. It carries out the reaction 7-[(3S)-(3-amino-3-methoxycarbonyl)propyl]wyosine(37) in tRNA(Phe) + S-adenosyl-L-methionine + CO2 = wybutosine(37) in tRNA(Phe) + S-adenosyl-L-homocysteine + 2 H(+). Its pathway is tRNA modification; wybutosine-tRNA(Phe) biosynthesis. In terms of biological role, probable S-adenosyl-L-methionine-dependent methyltransferase that acts as a component of the wybutosine biosynthesis pathway. Wybutosine is a hyper modified guanosine with a tricyclic base found at the 3'-position adjacent to the anticodon of eukaryotic phenylalanine tRNA. May methylate the carboxyl group of leucine residues to form alpha-leucine ester residues. The sequence is that of tRNA wybutosine-synthesizing protein 4 (lcm-2) from Neurospora crassa (strain ATCC 24698 / 74-OR23-1A / CBS 708.71 / DSM 1257 / FGSC 987).